The sequence spans 294 residues: MKILVTGGSGFIGKNLIYLLREKREFEVFGATVEETMDLTNPCSVQSVLEKTKPDFIVHLAALTFVPNNNPITFYLVNTIGTENLLRSIVDLNVAKLGVLCFSTAGIYGIQETKLLSESLTPKPVNHYSMSKHCMEHIVNKYRCFRGITVVRPFNVLGLGQNINFLVPKMVSAFVKKDKTIELGNLDSVRDFISVNDCCDIIYRLISKLIENETINICTGIGYSVYQIFQLLCEISMHQMEIKQNELFVRHDDIPQMIGDPSKLLNVLGNDYRFTSVRAILEEMYKNRLLELSI.

NAD(+)-binding positions include 11-12 (FI), 38-39 (DL), 60-64 (LAALT), T104, Y128, K132, and F154. Positions 104 and 128 each coordinate substrate. Catalysis depends on Y128, which acts as the Proton acceptor. Substrate is bound by residues N155 and R190.

It belongs to the NAD(P)-dependent epimerase/dehydratase family.

The catalysed reaction is GDP-6-deoxy-alpha-D-talose + NAD(+) = GDP-4-dehydro-alpha-D-rhamnose + NADH + H(+). It carries out the reaction GDP-6-deoxy-alpha-D-talose + NADP(+) = GDP-4-dehydro-alpha-D-rhamnose + NADPH + H(+). Its pathway is bacterial outer membrane biogenesis; LPS O-antigen biosynthesis. Catalyzes the conversion of GDP-4-dehydro-6-deoxy-D-mannose to GDP-6-deoxy-D-talose. This Aggregatibacter actinomycetemcomitans (Actinobacillus actinomycetemcomitans) protein is GDP-6-deoxy-D-talose 4-dehydrogenase (tld).